A 739-amino-acid polypeptide reads, in one-letter code: Platelet endothelial cell adhesion molecule (739 aa).

The first 27 residues, 1–27 (MQLRWTQRGMMWLGALLTLLLCSSLKG), serve as a signal peptide directing secretion. Residues 28–599 (QENSFTINSI…TVRVYLPLEK (572 aa)) lie on the Extracellular side of the membrane. Ig-like C2-type domains follow at residues 35–120 (NSIH…EKTT), 145–213 (GGVV…IFSG), and 236–315 (PKFH…SKVS). Residues N52, N84, and N151 are each glycosylated (N-linked (GlcNAc...) asparagine). C57 and C109 are joined by a disulfide. 2 disulfides stabilise this stretch: C152/C206 and C256/C304. N-linked (GlcNAc...) asparagine glycosylation is found at N301, N320, N356, N371, N435, N446, N453, N550, and N578. Ig-like C2-type domains lie at 328–403 (PKLE…VQIT), 424–493 (GQTI…EVLR), and 499–590 (PVDE…NTLT). 3 disulfides stabilise this stretch: C347–C386, C431–C476, and C522–C571. A helical membrane pass occupies residues 600-618 (GLIAVVVIGVIIVTLVLGA). At 619-739 (KCYFLKKAKA…SRTEGSLDGS (121 aa)) the chain is on the cytoplasmic side. Residue C620 is the site of S-palmitoyl cysteine attachment. 2 short sequence motifs (ITIM motif) span residues 687–692 (VEYTEV) and 712–717 (TVYSEI). A phosphotyrosine; by FER mark is found at Y689 and Y714. The interval 708–730 (TETETVYSEIRKADPDFVENRYS) is membrane-bound segment which detaches upon phosphorylation. A may play a role in cytoprotective signaling region spans residues 722–739 (PDFVENRYSRTEGSLDGS). A phosphoserine mark is found at S730 and S735.

Trans-homodimer (via Ig-like C2-type 1 and Ig-like C2-type 2 domains); trans-homodimerization is required for cell-cell interaction. Forms a complex with BDKRB2 and GNAQ. Interacts with BDKRB2 and GNAQ. Interacts with PTPN11; Tyr-714 is critical for PTPN11 recruitment. Interacts with FER. Interacts with CD177; the interaction is Ca(2+)-dependent; the interaction is direct. Post-translationally, phosphorylated on Ser and Tyr residues by src kinases after cellular activation. Upon activation, phosphorylated on Ser-730 which probably initiates the dissociation of the membrane-interaction segment (residues 708-730) from the cell membrane allowing the sequential phosphorylation of Tyr-714 and Tyr-689. Constitutively phosphorylated on Ser-735 in resting platelets. Phosphorylated on tyrosine residues by FER and FES in response to FCER1 activation. In endothelial cells Fyn mediates mechanical-force (stretch or pull) induced tyrosine phosphorylation. In terms of processing, palmitoylation by ZDHHC21 is necessary for cell surface expression in endothelial cells and enrichment in membrane rafts.

The protein localises to the cell membrane. Its subcellular location is the membrane raft. The protein resides in the cell junction. Its function is as follows. Cell adhesion molecule which is required for leukocyte transendothelial migration (TEM) under most inflammatory conditions. Tyr-689 plays a critical role in TEM and is required for efficient trafficking of PECAM1 to and from the lateral border recycling compartment (LBRC) and is also essential for the LBRC membrane to be targeted around migrating leukocytes. Trans-homophilic interaction may play a role in endothelial cell-cell adhesion via cell junctions. Heterophilic interaction with CD177 plays a role in transendothelial migration of neutrophils. Homophilic ligation of PECAM1 prevents macrophage-mediated phagocytosis of neighboring viable leukocytes by transmitting a detachment signal. Promotes macrophage-mediated phagocytosis of apoptotic leukocytes by tethering them to the phagocytic cells; PECAM1-mediated detachment signal appears to be disabled in apoptotic leukocytes. Modulates bradykinin receptor BDKRB2 activation. Regulates bradykinin- and hyperosmotic shock-induced ERK1/2 activation in endothelial cells. Induces susceptibility to atherosclerosis. The chain is Platelet endothelial cell adhesion molecule (PECAM1) from Bos taurus (Bovine).